The chain runs to 475 residues: UDP-glucosyltransferase 102 (475 aa).

Residues S278, 344–345, 362–370, and 384–387 each bind UDP-alpha-D-glucose; these read WA, HCGWNSTLE, and YGEQ.

This sequence belongs to the UDP-glycosyltransferase family.

It participates in secondary metabolite biosynthesis; terpenoid biosynthesis. Its function is as follows. Probable component of the triterpene saponins (e.g. ginsenosides) biosynthetic pathway. No detectable activity toward protopanaxatriol (PPT). The polypeptide is UDP-glucosyltransferase 102 (UGT102) (Panax ginseng (Korean ginseng)).